Consider the following 957-residue polypeptide: Iron-responsive element-binding protein 2 (957 aa).

3 residues coordinate [4Fe-4S] cluster: cysteine 506, cysteine 572, and cysteine 575.

Belongs to the aconitase/IPM isomerase family. [4Fe-4S] cluster serves as cofactor. Post-translationally, ubiquitinated and degraded by the proteasome in presence of high level of iron and oxygen.

It is found in the cytoplasm. In terms of biological role, RNA-binding protein that binds to iron-responsive elements (IRES), which are stem-loop structures found in the 5'-UTR of ferritin, and delta aminolevulinic acid synthase mRNAs, and in the 3'-UTR of transferrin receptor mRNA. Binding to the IRE element in ferritin results in the repression of its mRNA translation. Binding of the protein to the transferrin receptor mRNA inhibits the degradation of this otherwise rapidly degraded mRNA. The sequence is that of Iron-responsive element-binding protein 2 (ireb2) from Xenopus tropicalis (Western clawed frog).